The following is an 89-amino-acid chain: Small ribosomal subunit protein uS15 (89 aa).

It belongs to the universal ribosomal protein uS15 family. In terms of assembly, part of the 30S ribosomal subunit. Forms a bridge to the 50S subunit in the 70S ribosome, contacting the 23S rRNA.

Its function is as follows. One of the primary rRNA binding proteins, it binds directly to 16S rRNA where it helps nucleate assembly of the platform of the 30S subunit by binding and bridging several RNA helices of the 16S rRNA. In terms of biological role, forms an intersubunit bridge (bridge B4) with the 23S rRNA of the 50S subunit in the ribosome. The polypeptide is Small ribosomal subunit protein uS15 (Mycobacterium avium (strain 104)).